A 362-amino-acid polypeptide reads, in one-letter code: MDLHLFDYAEPGNFSDISWPCNSSDCIVVDTVLCPNMPNKSVLLYTLSFIYIFIFVIGMIANSVVVWVNIQAKTTGYDTHCYILNLAIADLWVVVTIPVWVVSLVQHNQWPMGELTCKITHLIFSINLFGSIFFLTCMSVDRYLSITYFASTSSRRKKVVRRAVCVLVWLLAFCVSLPDTYYLKTVTSASNNETYCRSFYPEHSVKEWLISMELVSVVLGFAIPFCVIAVFYCLLARAISASSDQEKQSSRKIIFSYVVVFLVCWLPYHVVVLLDIFSILHYIPFTCQLENFLFTALHVTQCLSLVHCCVNPVLYSFINRNYRYELMKAFIFKYSAKTGLTKLIDASRVSETEYSALEQNAK.

Over Met1–Lys40 the chain is Extracellular. Asn13, Asn22, and Asn39 each carry an N-linked (GlcNAc...) asparagine glycan. Residues Ser41 to Ala61 form a helical membrane-spanning segment. Topologically, residues Asn62–Cys81 are cytoplasmic. Residues Tyr82 to Val102 traverse the membrane as a helical segment. At Ser103–Lys118 the chain is on the extracellular side. A disulfide bridge links Cys117 with Cys196. The helical transmembrane segment at Ile119–Ser139 threads the bilayer. Topologically, residues Val140–Arg162 are cytoplasmic. The chain crosses the membrane as a helical span at residues Ala163–Leu183. The Extracellular segment spans residues Lys184–Glu213. A helical transmembrane segment spans residues Leu214–Leu234. Topologically, residues Leu235 to Lys252 are cytoplasmic. Residues Ile253–Leu273 traverse the membrane as a helical segment. At Leu274–Ala296 the chain is on the extracellular side. The helical transmembrane segment at Leu297–Asn319 threads the bilayer. At Arg320–Lys362 the chain is on the cytoplasmic side. Residues Tyr324 to Lys362 form a C-terminal cytoplasmic tail region. 3 positions are modified to phosphoserine: Ser347, Ser350, and Ser355.

The protein belongs to the G-protein coupled receptor 1 family. Atypical chemokine receptor subfamily. In terms of assembly, homodimer. Can form heterodimers with CXCR4; heterodimerization may regulate CXCR4 signaling activity. Interacts with ARRB1 and ARRB2. The Ser/Thr residues in the C-terminal cytoplasmic tail may be phosphorylated. Post-translationally, ubiquitinated at the Lys residues in its C-terminal cytoplasmic tail and is essential for correct trafficking from and to the cell membrane. Deubiquitinated by CXCL12-stimulation in a reversible manner.

The protein resides in the cell membrane. It localises to the early endosome. Its subcellular location is the recycling endosome. Functionally, atypical chemokine receptor that controls chemokine levels and localization via high-affinity chemokine binding that is uncoupled from classic ligand-driven signal transduction cascades, resulting instead in chemokine sequestration, degradation, or transcytosis. Also known as interceptor (internalizing receptor) or chemokine-scavenging receptor or chemokine decoy receptor. Acts as a receptor for chemokines CXCL11 and CXCL12/SDF1. Chemokine binding does not activate G-protein-mediated signal transduction but instead induces beta-arrestin recruitment, leading to ligand internalization and activation of MAPK signaling pathway. Required for regulation of CXCR4 protein levels in migrating interneurons, thereby adapting their chemokine responsiveness. In glioma cells, transduces signals via MEK/ERK pathway, mediating resistance to apoptosis. Promotes cell growth and survival. Not involved in cell migration, adhesion or proliferation of normal hematopoietic progenitors but activated by CXCL11 in malignant hemapoietic cells, leading to phosphorylation of ERK1/2 (MAPK3/MAPK1) and enhanced cell adhesion and migration. Plays a regulatory role in CXCR4-mediated activation of cell surface integrins by CXCL12. Required for heart valve development. Regulates axon guidance in the oculomotor system through the regulation of CXCL12 levels. In Canis lupus familiaris (Dog), this protein is Atypical chemokine receptor 3 (ACKR3).